The chain runs to 1129 residues: CRISPR-associated endonuclease Cas12b (1129 aa).

The interval 1 to 14 (MAVKSIKVKLRLDD) is WED-I (OBD-I) domain. The tract at residues 4–9 (KSIKVK) is binds sgRNA. Residues 15–386 (MPEIRAGLWK…FATFTLPDAT (372 aa)) form an REC1 (Helical-1)domain region. 2 binds DNA protospacer adjacent motif (PAM) on target DNA regions span residues 118 to 122 (QQIAR) and 143 to 144 (GN). Residues 387–518 (AHPIWTRFDK…QSQSEARGER (132 aa)) form a WED-II (OBD-II) domain region. A binds sgRNA region spans residues 442–446 (SMSEQ). The segment at 519–628 (RPPYAAVFRL…LLKLPGETES (110 aa)) is ruvC-I domain. The For DNase activity of RuvC domain role is filled by aspartate 570. The tract at residues 573 to 574 (LR) is binds non-target ssDNA. A bridge helix domain region spans residues 629–658 (KDLRAIREERQRTLRQLRTQLAYLRLLVRC). The tract at residues 659 to 784 (GSEDVGRRER…SFFGKVSGQV (126 aa)) is REC2 (Helical-II) domain. Binds sgRNA stretches follow at residues 742–746 (RPKIR), 753–754 (VG), 792–796 (RFAIT), 800–819 (HIDHAKEDRLKKLADRIIME), and 835–839 (WVAKY). Positions 785–900 (IRAEKGSRFA…GTMYAAFSSR (116 aa)) are ruvC-II domain. The active-site For DNase activity of RuvC domain is the glutamate 848. Residues 897-900 (FSSR) form a binds non-target ssDNA region. Residues serine 899 and arginine 911 each contribute to the phosphate site. The interval 901–974 (FDARTGAPGI…SAEEGDFHQI (74 aa)) is nuc-I domain. The segment at 973-978 (QIHADL) is binds sgRNA. Positions 975 to 993 (HADLNAAQNLQQRLWSDFD) are ruvC-III domain. The active-site For DNase activity of RuvC domain is aspartate 977. The segment at 994-1129 (ISQIRLRCDW…DSACENTGDI (136 aa)) is nuc-II domain.

This sequence belongs to the CRISPR-associated endonuclease Cas12b family. Monomer. Requires a divalent metal cation as cofactor.

Its function is as follows. CRISPR (clustered regularly interspaced short palindromic repeat), is an adaptive immune system that provides protection against mobile genetic elements (viruses, transposable elements and conjugative plasmids). CRISPR clusters contain sequences complementary to antecedent mobile elements and target invading nucleic acids. CRISPR clusters are transcribed and processed into CRISPR RNA (crRNA). In type II CRISPR systems correct processing of pre-crRNA requires a trans-encoded small RNA (tracrRNA), endogenous ribonuclease 3 (rnc) and this protein. The tracrRNA serves as a guide for ribonuclease 3-aided processing of pre-crRNA. Protein-crRNA-tracrRNA endonucleolytically cleave dsDNA target complementary to the spacer; protein is inactive in the absence of crRNA homologous to the target and tracrRNA. Recognizes a short motif in the CRISPR repeat sequences (the 5' PAM or protospacer adjacent motif, TTN in this organism) to help distinguish self versus nonself, as targets within the bacterial CRISPR locus do not have PAMs. PAM recognition is also required for catalytic activity. Cleavage results in staggered 6-8 base 5'-overhangs 14-17 and 23-24 bases downstream of the PAM (protospacer adjacent motif) on the non-target and target strands respectively. Both target and non-target strand DNA are probably independently cleaved in the same active site. The chain is CRISPR-associated endonuclease Cas12b from Alicyclobacillus acidoterrestris (strain ATCC 49025 / DSM 3922 / CIP 106132 / NCIMB 13137 / GD3B).